Reading from the N-terminus, the 843-residue chain is DNA gyrase subunit A (843 aa).

Positions Leu61 to Leu528 constitute a Topo IIA-type catalytic domain. Tyr149 (O-(5'-phospho-DNA)-tyrosine intermediate) is an active-site residue. The GyrA-box signature appears at Gln555–Gly561.

This sequence belongs to the type II topoisomerase GyrA/ParC subunit family. Heterotetramer, composed of two GyrA and two GyrB chains. In the heterotetramer, GyrA contains the active site tyrosine that forms a transient covalent intermediate with DNA, while GyrB binds cofactors and catalyzes ATP hydrolysis.

Its subcellular location is the cytoplasm. The enzyme catalyses ATP-dependent breakage, passage and rejoining of double-stranded DNA.. In terms of biological role, a type II topoisomerase that negatively supercoils closed circular double-stranded (ds) DNA in an ATP-dependent manner to modulate DNA topology and maintain chromosomes in an underwound state. Negative supercoiling favors strand separation, and DNA replication, transcription, recombination and repair, all of which involve strand separation. Also able to catalyze the interconversion of other topological isomers of dsDNA rings, including catenanes and knotted rings. Type II topoisomerases break and join 2 DNA strands simultaneously in an ATP-dependent manner. This is DNA gyrase subunit A from Leptospira biflexa serovar Patoc (strain Patoc 1 / Ames).